Consider the following 272-residue polypeptide: Undecaprenyl-diphosphatase (272 aa).

The next 7 helical transmembrane spans lie at 6-26, 45-65, 92-112, 115-135, 189-209, 221-241, and 251-271; these read SLLIAFILGVVEGLTEFLPVS, AKTFEVIIQLGSILAVVVMFW, THILLAMIPAVVLGLIFHDVI, LFYPQNVMYSLVIGGFLLLAA, YAASEFSFILAVPMMMGATVL, ADVPMFAVGFVTAFVVALIAI, and ISFIPFAIYRFIVAGVVYMVF.

Belongs to the UppP family.

Its subcellular location is the cell inner membrane. It carries out the reaction di-trans,octa-cis-undecaprenyl diphosphate + H2O = di-trans,octa-cis-undecaprenyl phosphate + phosphate + H(+). Its function is as follows. Catalyzes the dephosphorylation of undecaprenyl diphosphate (UPP). Confers resistance to bacitracin. The polypeptide is Undecaprenyl-diphosphatase (Pectobacterium atrosepticum (strain SCRI 1043 / ATCC BAA-672) (Erwinia carotovora subsp. atroseptica)).